Here is a 67-residue protein sequence, read N- to C-terminus: Protein AaeX (67 aa).

Helical transmembrane passes span 3–23 and 43–63; these read LFPVIVVFGLSFPPIFFELLL and FVWHPALFNTALYCCLFYLIS.

This sequence belongs to the AaeX family.

It localises to the cell membrane. The chain is Protein AaeX from Salmonella agona (strain SL483).